We begin with the raw amino-acid sequence, 1564 residues long: Superkiller complex protein 3 (1564 aa).

At Ser2 the chain carries N-acetylserine. TPR repeat units lie at residues 6 to 39 (VKTALKSARDAIRNKEYKEALKHCKTVLKQEKNN), 40 to 73 (YNAWVFIGVAAAELEQPDQAQSAYKKAAELEPDQ), 272 to 305 (GPGLIGLGIKALQDKKYEDAVRNLTEGLKESPVC), 307 to 339 (SGWYHLAEAQVKMHRPKEAVLSCSQALKIVDNL), 386 to 419 (PGLLVLKSLAYRNKGSFDEAAKIMEDLLSSYPDL), 420 to 453 (AEVHALEALIHFTKKDYLQAEKCFQRALEKDTEV), 455 to 492 (EYHYQLGLTYWFMGEETRKDKTKALTHFLKAARLDTYM), 493 to 527 (GKVFCYLGHYYRDVVGDKNRARGCYRKAFELDDTD), 564 to 597 (KWAWLRRGLYYLKAGQHSQAVADLQAALRADPKD), 598 to 631 (FNCWESLGEAYLSRGGYTTALKSFTKASELNPES), 633 to 665 (YSVFKVAAIQQILGKYKEAVAQYQMIIKKKEDY), 679 to 713 (MAKAALVDYLDGKAVDYIEKALEYFTCALQHRADV), 790 to 824 (AQHLAETGSNMNDLKELLEKSLHCLKKAVRLDSNN), 826 to 860 (LYWNALGVVACYSGIGNYALAQHCFIKSIQSEQIN), 861 to 894 (AVAWTNLGVLYLTNENIEQAHEAFKMAQSLDPSY), 980 to 1013 (APAFTMLGYLNEHLQLKKEAANAYQRAILLLQTA), 1020 to 1054 (NVAIRNYGRLLCSTGEYDKAIQAFKSTPLEVLEDI), 1056 to 1084 (GFALALFMKGLYKESSKAYERALSIVESE), 1326 to 1359 (KWSLSQAVTGLIDTGRISEAETLCTKNLKSNPDQ), and 1400 to 1433 (VPAWQWLAHVYQSQGMMRAAEMCYRKSLQLASQR).

It belongs to the SKI3 family. Component of the SKI complex which consists of SKIC2, SKIC3 and SKIC8. Interacts with PAF1. Widely expressed with the highest levels observed in vascular tissues, lymph node, pituitary, lung and intestine. Not expressed in the liver.

It localises to the cytoplasm. The protein resides in the nucleus. In terms of biological role, component of the SKI complex, a multiprotein complex that assists the RNA-degrading exosome during the mRNA decay and quality-control pathways. The SKI complex catalyzes mRNA extraction from 80S ribosomal complexes in the 3'-5' direction and channels mRNA to the cytosolic exosome for degradation. SKI-mediated extraction of mRNA from stalled ribosomes allow binding of the Pelota-HBS1L complex and subsequent ribosome disassembly by ABCE1 for ribosome recycling. In the nucleus, the SKI complex associates with transcriptionally active genes in a manner dependent on PAF1 complex (PAF1C). The protein is Superkiller complex protein 3 of Homo sapiens (Human).